A 911-amino-acid chain; its full sequence is Isoleucine--tRNA ligase (911 aa).

The 'HIGH' region signature appears at 57–67 (PYANGHIHIGH). Residue Glu-564 coordinates L-isoleucyl-5'-AMP. Positions 605–609 (KMSKS) match the 'KMSKS' region motif. An ATP-binding site is contributed by Lys-608. 4 residues coordinate Zn(2+): Cys-887, Cys-890, Cys-902, and Cys-905.

This sequence belongs to the class-I aminoacyl-tRNA synthetase family. IleS type 1 subfamily. As to quaternary structure, monomer. Requires Zn(2+) as cofactor.

Its subcellular location is the cytoplasm. It carries out the reaction tRNA(Ile) + L-isoleucine + ATP = L-isoleucyl-tRNA(Ile) + AMP + diphosphate. In terms of biological role, catalyzes the attachment of isoleucine to tRNA(Ile). As IleRS can inadvertently accommodate and process structurally similar amino acids such as valine, to avoid such errors it has two additional distinct tRNA(Ile)-dependent editing activities. One activity is designated as 'pretransfer' editing and involves the hydrolysis of activated Val-AMP. The other activity is designated 'posttransfer' editing and involves deacylation of mischarged Val-tRNA(Ile). This is Isoleucine--tRNA ligase from Nautilia profundicola (strain ATCC BAA-1463 / DSM 18972 / AmH).